A 336-amino-acid polypeptide reads, in one-letter code: 7,8-didemethyl-8-hydroxy-5-deazariboflavin synthase (336 aa).

A Radical SAM core domain is found at 18–249; that stretch reads ITYSPAYTLV…TSIAIQVPPN (232 aa). Residues Cys-32, Cys-36, and Cys-39 each coordinate [4Fe-4S] cluster.

Belongs to the radical SAM superfamily. CofG family. In terms of assembly, consists of two subunits, CofG and CofH. It depends on [4Fe-4S] cluster as a cofactor.

The enzyme catalyses 5-amino-5-(4-hydroxybenzyl)-6-(D-ribitylimino)-5,6-dihydrouracil + S-adenosyl-L-methionine = 7,8-didemethyl-8-hydroxy-5-deazariboflavin + 5'-deoxyadenosine + L-methionine + NH4(+) + H(+). The protein operates within cofactor biosynthesis; coenzyme F0 biosynthesis. Its function is as follows. Catalyzes the radical-mediated synthesis of 7,8-didemethyl-8-hydroxy-5-deazariboflavin from 5-amino-5-(4-hydroxybenzyl)-6-(D-ribitylimino)-5,6-dihydrouracil. The chain is 7,8-didemethyl-8-hydroxy-5-deazariboflavin synthase from Synechococcus elongatus (strain ATCC 33912 / PCC 7942 / FACHB-805) (Anacystis nidulans R2).